The sequence spans 309 residues: tRNA dimethylallyltransferase (309 aa).

11–18 contributes to the ATP binding site; that stretch reads GPTATGKS. A substrate-binding site is contributed by 13 to 18; that stretch reads TATGKS.

It belongs to the IPP transferase family. Monomer. The cofactor is Mg(2+).

The catalysed reaction is adenosine(37) in tRNA + dimethylallyl diphosphate = N(6)-dimethylallyladenosine(37) in tRNA + diphosphate. In terms of biological role, catalyzes the transfer of a dimethylallyl group onto the adenine at position 37 in tRNAs that read codons beginning with uridine, leading to the formation of N6-(dimethylallyl)adenosine (i(6)A). The sequence is that of tRNA dimethylallyltransferase from Rhodococcus jostii (strain RHA1).